A 77-amino-acid chain; its full sequence is UPF0291 protein EAT1b_0405 (77 aa).

A disordered region spans residues 53 to 77 (KVVDPDGNDVTPEKLKEDQKRYRGE). The span at 63 to 77 (TPEKLKEDQKRYRGE) shows a compositional bias: basic and acidic residues.

Belongs to the UPF0291 family.

It localises to the cytoplasm. The polypeptide is UPF0291 protein EAT1b_0405 (Exiguobacterium sp. (strain ATCC BAA-1283 / AT1b)).